Here is a 394-residue protein sequence, read N- to C-terminus: 8-amino-7-oxononanoate synthase (394 aa).

A substrate-binding site is contributed by Arg-21. 112-113 is a binding site for pyridoxal 5'-phosphate; sequence GY. Residue His-137 participates in substrate binding. Residues Ser-183, His-211, and Thr-239 each contribute to the pyridoxal 5'-phosphate site. Lys-242 carries the post-translational modification N6-(pyridoxal phosphate)lysine. Thr-358 is a binding site for substrate.

The protein belongs to the class-II pyridoxal-phosphate-dependent aminotransferase family. BioF subfamily. As to quaternary structure, homodimer. It depends on pyridoxal 5'-phosphate as a cofactor.

It catalyses the reaction 6-carboxyhexanoyl-[ACP] + L-alanine + H(+) = (8S)-8-amino-7-oxononanoate + holo-[ACP] + CO2. It functions in the pathway cofactor biosynthesis; biotin biosynthesis. Its function is as follows. Catalyzes the decarboxylative condensation of pimeloyl-[acyl-carrier protein] and L-alanine to produce 8-amino-7-oxononanoate (AON), [acyl-carrier protein], and carbon dioxide. In Burkholderia pseudomallei (strain 1710b), this protein is 8-amino-7-oxononanoate synthase.